The following is a 130-amino-acid chain: Small ribosomal subunit protein uS9 (130 aa).

It belongs to the universal ribosomal protein uS9 family.

This Burkholderia pseudomallei (strain K96243) protein is Small ribosomal subunit protein uS9.